The primary structure comprises 705 residues: Prolyl endopeptidase (705 aa).

The first 20 residues, 1-20 (MKYNKLSVAVAAFAFAAVSA), serve as a signal peptide directing secretion. Residues serine 556 and histidine 675 each act as charge relay system in the active site.

It belongs to the peptidase S9A family. In terms of assembly, monomer.

The protein resides in the periplasm. It catalyses the reaction Hydrolysis of Pro-|-Xaa &gt;&gt; Ala-|-Xaa in oligopeptides.. Functionally, cleaves peptide bonds on the C-terminal side of prolyl residues within peptides that are up to approximately 30 amino acids long. Has an absolute requirement for an X-Pro bond in the trans configuration immediately preceding the Pro-Y scissible bond. The polypeptide is Prolyl endopeptidase (f1pep1) (Elizabethkingia meningoseptica (Chryseobacterium meningosepticum)).